Here is a 521-residue protein sequence, read N- to C-terminus: Citrinin biosynthesis cluster MFS transporter ctnC (521 aa).

Residues 1–29 (MKEEIDAPVSTDASGTDLENARDQPSGEK) form a disordered region. 8 helical membrane-spanning segments follow: residues 58 to 78 (SLIT…SSVF), 95 to 115 (VMTL…LVWG), 124 to 144 (LKPL…VAVA), 155 to 175 (FFLG…LADF), 182 to 202 (AIAI…GPIM), 237 to 257 (WTAW…FLTL), 313 to 333 (ILVC…LFFV), and 349 to 369 (GIAA…CLLV). N383 carries N-linked (GlcNAc...) asparagine glycosylation. The next 4 membrane-spanning stretches (helical) occupy residues 392–412 (LPPM…FGWT), 417–437 (ISWA…LMIW), 465–485 (AVSA…GVDW), and 489–509 (LLGF…FYGA).

The protein belongs to the major facilitator superfamily. CAR1 family.

Its subcellular location is the membrane. Its function is as follows. MFS transporter; part of the gene cluster that mediates the biosynthesis the mycotoxin citrinin, a hepato-nephrotoxic compound to humans due to inhibition of respiration complex III. The protein is Citrinin biosynthesis cluster MFS transporter ctnC (ctnC) of Monascus purpureus (Red mold).